A 269-amino-acid polypeptide reads, in one-letter code: 4-hydroxy-tetrahydrodipicolinate reductase (269 aa).

NAD(+) contacts are provided by residues 10–15 (GANGRM), Glu-36, 99–101 (GTT), and 123–126 (AANF). The active-site Proton donor/acceptor is the His-156. A (S)-2,3,4,5-tetrahydrodipicolinate-binding site is contributed by His-157. The active-site Proton donor is Lys-160. 166-167 (GT) provides a ligand contact to (S)-2,3,4,5-tetrahydrodipicolinate.

This sequence belongs to the DapB family.

It localises to the cytoplasm. It carries out the reaction (S)-2,3,4,5-tetrahydrodipicolinate + NAD(+) + H2O = (2S,4S)-4-hydroxy-2,3,4,5-tetrahydrodipicolinate + NADH + H(+). The enzyme catalyses (S)-2,3,4,5-tetrahydrodipicolinate + NADP(+) + H2O = (2S,4S)-4-hydroxy-2,3,4,5-tetrahydrodipicolinate + NADPH + H(+). Its pathway is amino-acid biosynthesis; L-lysine biosynthesis via DAP pathway; (S)-tetrahydrodipicolinate from L-aspartate: step 4/4. Functionally, catalyzes the conversion of 4-hydroxy-tetrahydrodipicolinate (HTPA) to tetrahydrodipicolinate. This is 4-hydroxy-tetrahydrodipicolinate reductase from Neisseria meningitidis serogroup C (strain 053442).